We begin with the raw amino-acid sequence, 104 residues long: Large ribosomal subunit protein uL24 (104 aa).

This sequence belongs to the universal ribosomal protein uL24 family. As to quaternary structure, part of the 50S ribosomal subunit.

In terms of biological role, one of two assembly initiator proteins, it binds directly to the 5'-end of the 23S rRNA, where it nucleates assembly of the 50S subunit. Functionally, one of the proteins that surrounds the polypeptide exit tunnel on the outside of the subunit. The polypeptide is Large ribosomal subunit protein uL24 (Saccharopolyspora erythraea (strain ATCC 11635 / DSM 40517 / JCM 4748 / NBRC 13426 / NCIMB 8594 / NRRL 2338)).